Reading from the N-terminus, the 294-residue chain is FAD-dependent monooxygenase SAT1 (294 aa).

Aspartate 108 is an FAD binding site.

This sequence belongs to the paxM FAD-dependent monooxygenase family. FAD serves as cofactor.

The protein operates within mycotoxin biosynthesis. In terms of biological role, FAD-dependent monooxygenase; part of the satratoxin SC1 cluster involved in the biosynthesis of satratoxins, trichothecene mycotoxins that are associated with human food poisonings. Satratoxins are suggested to be made by products of multiple gene clusters (SC1, SC2 and SC3) that encode 21 proteins in all, including polyketide synthases, acetyltransferases, and other enzymes expected to modify the trichothecene skeleton. SC1 encodes 10 proteins, SAT1 to SAT10. The largest are SAT8, which encodes a putative polyketide synthase (PKS) with a conventional non-reducing architecture, and SAT10, a putative protein containing four ankyrin repeats and thus may be involved in protein scaffolding. The putative short-chain reductase SAT3 may assist the PKS in some capacity. SAT6 contains a secretory lipase domain and acts probably as a trichothecene esterase. SAT5 encodes a putative acetyltransferase, and so, with SAT6, may affect endogenous protection from toxicity. The probable transcription factor SAT9 may regulate the expression of the SC1 cluster. SC2 encodes proteins SAT11 to SAT16, the largest of which encodes the putative reducing PKS SAT13. SAT11 is a cytochrome P450 monooxygenase, while SAT14 and SAT16 are probable acetyltransferases. The SC2 cluster may be regulated by the transcription factor SAT15. SC3 is a small cluster that encodes 5 proteins, SAT17 to SAT21. SAT21 is a putative MFS-type transporter which may have a role in exporting secondary metabolites. The four other proteins putatively encoded in SC3 include the taurine hydroxylase-like protein SAT17, the O-methyltransferase SAT18, the acetyltransferase SAT19, and the Cys6-type zinc finger SAT20, the latter being probably involved in regulation of SC3 expression. The chain is FAD-dependent monooxygenase SAT1 from Stachybotrys chartarum (strain CBS 109288 / IBT 7711) (Toxic black mold).